The primary structure comprises 67 residues: Protein AaeX (67 aa).

The next 2 membrane-spanning stretches (helical) occupy residues 10-30 and 43-63; these read FGLSFPPVFFVLMVSLTLFFV and FVWHPALFNSALFCCLFYLLF.

The protein belongs to the AaeX family.

Its subcellular location is the cell membrane. This chain is Protein AaeX, found in Pectobacterium atrosepticum (strain SCRI 1043 / ATCC BAA-672) (Erwinia carotovora subsp. atroseptica).